The chain runs to 317 residues: Aspartate carbamoyltransferase catalytic subunit (317 aa).

The carbamoyl phosphate site is built by R65 and T66. Position 93 (K93) interacts with L-aspartate. Carbamoyl phosphate contacts are provided by R115, H145, and Q148. 2 residues coordinate L-aspartate: R178 and R233. Residues G274 and P275 each contribute to the carbamoyl phosphate site.

Belongs to the aspartate/ornithine carbamoyltransferase superfamily. ATCase family. In terms of assembly, heterododecamer (2C3:3R2) of six catalytic PyrB chains organized as two trimers (C3), and six regulatory PyrI chains organized as three dimers (R2).

The enzyme catalyses carbamoyl phosphate + L-aspartate = N-carbamoyl-L-aspartate + phosphate + H(+). It functions in the pathway pyrimidine metabolism; UMP biosynthesis via de novo pathway; (S)-dihydroorotate from bicarbonate: step 2/3. In terms of biological role, catalyzes the condensation of carbamoyl phosphate and aspartate to form carbamoyl aspartate and inorganic phosphate, the committed step in the de novo pyrimidine nucleotide biosynthesis pathway. The polypeptide is Aspartate carbamoyltransferase catalytic subunit (Bordetella parapertussis (strain 12822 / ATCC BAA-587 / NCTC 13253)).